Consider the following 115-residue polypeptide: Ig heavy chain V-III region W3082 (115 aa).

One can recognise an Ig-like domain in the interval 1 to 114; that stretch reads EVKLEESGGG…WGQGTLVTVS (114 aa). Cysteines 22 and 98 form a disulfide.

The sequence is that of Ig heavy chain V-III region W3082 from Mus musculus (Mouse).